Reading from the N-terminus, the 334-residue chain is Putative ankyrin repeat protein RBE_0347 (334 aa).

4 ANK repeats span residues 80–90 (EQGINPNIQDS), 91–120 (SGNTLLLYACQSSLVEVVQFLLKKGANPNI), 124–161 (SDNTPLSKIISNRFIDKTEIYIAKLLLQNGALTELKDF), and 162–191 (VGFTPIQSATQYGHTEIVKSLIQNGADINV).

The chain is Putative ankyrin repeat protein RBE_0347 from Rickettsia bellii (strain RML369-C).